Consider the following 100-residue polypeptide: Small ribosomal subunit protein uS14c (100 aa).

The protein belongs to the universal ribosomal protein uS14 family. As to quaternary structure, part of the 30S ribosomal subunit.

The protein resides in the plastid. It is found in the chloroplast. Functionally, binds 16S rRNA, required for the assembly of 30S particles. The sequence is that of Small ribosomal subunit protein uS14c from Tetradesmus obliquus (Green alga).